Consider the following 344-residue polypeptide: L-rhamnose-proton symporter (344 aa).

10 helical membrane passes run 4 to 24 (AITM…CFYA), 38 to 58 (WSVG…ALLL), 74 to 94 (LPVF…GLTM), 101 to 121 (MGIG…TPII), 137 to 157 (TLLG…AGQL), 175 to 195 (LVLA…MNAA), 214 to 234 (LPSY…FCFI), 259 to 279 (VLLS…YAWG), 290 to 310 (ISWM…GLVL), and 323 to 343 (VLSL…IGMA).

This sequence belongs to the L-rhamnose transporter (TC 2.A.7.6) family.

It is found in the cell inner membrane. It carries out the reaction L-rhamnopyranose(in) + H(+)(in) = L-rhamnopyranose(out) + H(+)(out). Its function is as follows. Uptake of L-rhamnose across the cytoplasmic membrane with the concomitant transport of protons into the cell (symport system). This chain is L-rhamnose-proton symporter, found in Escherichia coli (strain K12 / MC4100 / BW2952).